Here is a 90-residue protein sequence, read N- to C-terminus: Cell division topological specificity factor (90 aa).

It belongs to the MinE family.

Its function is as follows. Prevents the cell division inhibition by proteins MinC and MinD at internal division sites while permitting inhibition at polar sites. This ensures cell division at the proper site by restricting the formation of a division septum at the midpoint of the long axis of the cell. The protein is Cell division topological specificity factor of Bordetella avium (strain 197N).